A 445-amino-acid polypeptide reads, in one-letter code: 3-phosphoshikimate 1-carboxyvinyltransferase (445 aa).

3 residues coordinate 3-phosphoshikimate: Lys34, Ser35, and Arg39. Lys34 is a phosphoenolpyruvate binding site. Gly112 and Arg140 together coordinate phosphoenolpyruvate. 3-phosphoshikimate is bound by residues Ser186, Ser187, Gln188, Ser216, Glu331, and His358. Gln188 contributes to the phosphoenolpyruvate binding site. Residue Glu331 is the Proton acceptor of the active site. Residues Arg362, Arg403, and Lys428 each contribute to the phosphoenolpyruvate site.

It belongs to the EPSP synthase family. Monomer.

It is found in the cytoplasm. It carries out the reaction 3-phosphoshikimate + phosphoenolpyruvate = 5-O-(1-carboxyvinyl)-3-phosphoshikimate + phosphate. Its pathway is metabolic intermediate biosynthesis; chorismate biosynthesis; chorismate from D-erythrose 4-phosphate and phosphoenolpyruvate: step 6/7. Catalyzes the transfer of the enolpyruvyl moiety of phosphoenolpyruvate (PEP) to the 5-hydroxyl of shikimate-3-phosphate (S3P) to produce enolpyruvyl shikimate-3-phosphate and inorganic phosphate. In Kocuria rhizophila (strain ATCC 9341 / DSM 348 / NBRC 103217 / DC2201), this protein is 3-phosphoshikimate 1-carboxyvinyltransferase.